We begin with the raw amino-acid sequence, 225 residues long: ATP-dependent dethiobiotin synthetase BioD (225 aa).

15-20 (EIGKTF) serves as a coordination point for ATP. Thr19 serves as a coordination point for Mg(2+). Residue Lys40 is part of the active site. ATP contacts are provided by residues Asp57, 118 to 121 (EGVG), 178 to 179 (NR), and 207 to 209 (PHV). Asp57 and Glu118 together coordinate Mg(2+).

This sequence belongs to the dethiobiotin synthetase family. As to quaternary structure, homodimer. Mg(2+) serves as cofactor.

The protein localises to the cytoplasm. The enzyme catalyses (7R,8S)-7,8-diammoniononanoate + CO2 + ATP = (4R,5S)-dethiobiotin + ADP + phosphate + 3 H(+). Its pathway is cofactor biosynthesis; biotin biosynthesis; biotin from 7,8-diaminononanoate: step 1/2. Catalyzes a mechanistically unusual reaction, the ATP-dependent insertion of CO2 between the N7 and N8 nitrogen atoms of 7,8-diaminopelargonic acid (DAPA, also called 7,8-diammoniononanoate) to form a ureido ring. The sequence is that of ATP-dependent dethiobiotin synthetase BioD from Aromatoleum aromaticum (strain DSM 19018 / LMG 30748 / EbN1) (Azoarcus sp. (strain EbN1)).